Consider the following 305-residue polypeptide: MVDANAFIDEAIADIKLKVGNGKALIALSGGVDSSVCAILAHRALGDRLIPVYVDTGLMRKGETDRIREIFKFMNPHVVDASDRFFNALKGVTDPEAKRKIVGEMFIRVFEDVVKGLEVDFLIQGTIYPDRIESEGGIKSHHNVGGLPSVTEFKGIIEPLQDLYKDEVREVARALPLPEEISERMPFPGPGLSVRVIGEVTREKIAVVREANAIVEQELVHQFKPWQCLAALLEKGTGVKGDNRCHGWIIAVRAVESRDAMTANHMELPWETLNKISSRITSEIPSVARVVYDITPKPPATIEFE.

The region spanning 2 to 184 (VDANAFIDEA…LPLPEEISER (183 aa)) is the GMPS ATP-PPase domain. 29-35 (SGGVDSS) lines the ATP pocket.

In terms of assembly, heterodimer composed of a glutamine amidotransferase subunit (A) and a GMP-binding subunit (B).

The enzyme catalyses XMP + L-glutamine + ATP + H2O = GMP + L-glutamate + AMP + diphosphate + 2 H(+). The protein operates within purine metabolism; GMP biosynthesis; GMP from XMP (L-Gln route): step 1/1. Its function is as follows. Catalyzes the synthesis of GMP from XMP. This chain is GMP synthase [glutamine-hydrolyzing] subunit B, found in Methanocella arvoryzae (strain DSM 22066 / NBRC 105507 / MRE50).